Here is a 273-residue protein sequence, read N- to C-terminus: MLMRTATPLDQPRAIGSARVSSKRVNGGSGIDGLRQSGALKLLFPTSRDIVQATLINTAGGVTGGDRFDIDGCAGAGSRLTITTQAAERAYGAQIGQTGEIKTNLKAEAGSRLFWLPQETILYKDAAIDRQLGVDLSTGAEFLMVEPVLFGRRAMGEDVSTLAFRDRIDIRRDGAPIYLDAIHLQGDVATHLDRPAIADGARAMASLVWVSAEAEGRIDALRRIIGRSGGVSMLHPDVLVMRLLAADGYILRRSLIPVLDLITDDTLPQSWRL.

The disordered stretch occupies residues 1–29 (MLMRTATPLDQPRAIGSARVSSKRVNGGS).

It belongs to the UreD family. UreD, UreF and UreG form a complex that acts as a GTP-hydrolysis-dependent molecular chaperone, activating the urease apoprotein by helping to assemble the nickel containing metallocenter of UreC. The UreE protein probably delivers the nickel.

Its subcellular location is the cytoplasm. Functionally, required for maturation of urease via the functional incorporation of the urease nickel metallocenter. This is Urease accessory protein UreD from Roseobacter denitrificans (strain ATCC 33942 / OCh 114) (Erythrobacter sp. (strain OCh 114)).